Reading from the N-terminus, the 375-residue chain is Chaperone protein DnaJ (375 aa).

A J domain is found at 5-70 (DYYEVLGVAR…NKRRAYDAHG (66 aa)). The CR-type zinc-finger motif lies at 131-208 (GIERRIEIPT…CHGAGRVEED (78 aa)). 8 residues coordinate Zn(2+): Cys144, Cys147, Cys160, Cys163, Cys182, Cys185, Cys196, and Cys199. 4 CXXCXGXG motif repeats span residues 144–151 (CAPCHGSG), 160–167 (CGTCHGRG), 182–189 (CPHCDGRG), and 196–203 (CKTCHGAG).

The protein belongs to the DnaJ family. Homodimer. The cofactor is Zn(2+).

The protein resides in the cytoplasm. Participates actively in the response to hyperosmotic and heat shock by preventing the aggregation of stress-denatured proteins and by disaggregating proteins, also in an autonomous, DnaK-independent fashion. Unfolded proteins bind initially to DnaJ; upon interaction with the DnaJ-bound protein, DnaK hydrolyzes its bound ATP, resulting in the formation of a stable complex. GrpE releases ADP from DnaK; ATP binding to DnaK triggers the release of the substrate protein, thus completing the reaction cycle. Several rounds of ATP-dependent interactions between DnaJ, DnaK and GrpE are required for fully efficient folding. Also involved, together with DnaK and GrpE, in the DNA replication of plasmids through activation of initiation proteins. The sequence is that of Chaperone protein DnaJ from Xanthomonas euvesicatoria pv. vesicatoria (strain 85-10) (Xanthomonas campestris pv. vesicatoria).